The primary structure comprises 829 residues: Periplasmic nitrate reductase (829 aa).

The N-terminal stretch at 1-30 (MNSPRPTPPPFAAAAAGLPILVRASNLVTE) is a signal peptide. In terms of domain architecture, 4Fe-4S Mo/W bis-MGD-type spans 36 to 92 (LVWNKAPCRFCGTGCSVMVATRDGQVVATHGDIKAEVNRGINCVKGYFLSKIMYGSD). Residues Cys-43, Cys-46, Cys-50, and Cys-78 each coordinate [4Fe-4S] cluster. Residues Lys-80, Gln-147, Asn-172, Cys-176, 209 to 216 (WGSNMAEM), 240 to 244 (STFEH), 259 to 261 (QTD), Met-370, Gln-374, Asn-480, 506 to 507 (SD), Lys-529, Asp-556, and 716 to 725 (TGRVLEHWHT) each bind Mo-bis(molybdopterin guanine dinucleotide). Phe-792 provides a ligand contact to substrate. Residues Asn-800 and Lys-817 each contribute to the Mo-bis(molybdopterin guanine dinucleotide) site.

It belongs to the prokaryotic molybdopterin-containing oxidoreductase family. NasA/NapA/NarB subfamily. Component of the periplasmic nitrate reductase NapAB complex composed of NapA and NapB. It depends on [4Fe-4S] cluster as a cofactor. Mo-bis(molybdopterin guanine dinucleotide) serves as cofactor.

It is found in the periplasm. The enzyme catalyses 2 Fe(II)-[cytochrome] + nitrate + 2 H(+) = 2 Fe(III)-[cytochrome] + nitrite + H2O. Functionally, catalytic subunit of the periplasmic nitrate reductase complex NapAB. Receives electrons from NapB and catalyzes the reduction of nitrate to nitrite. The chain is Periplasmic nitrate reductase from Pseudomonas aeruginosa (strain ATCC 15692 / DSM 22644 / CIP 104116 / JCM 14847 / LMG 12228 / 1C / PRS 101 / PAO1).